The primary structure comprises 131 residues: Transcription antitermination protein NusB (131 aa).

The protein belongs to the NusB family.

Its function is as follows. Involved in transcription antitermination. Required for transcription of ribosomal RNA (rRNA) genes. Binds specifically to the boxA antiterminator sequence of the ribosomal RNA (rrn) operons. This chain is Transcription antitermination protein NusB, found in Agathobacter rectalis (strain ATCC 33656 / DSM 3377 / JCM 17463 / KCTC 5835 / VPI 0990) (Eubacterium rectale).